The sequence spans 158 residues: Transcription elongation factor GreA (158 aa).

Belongs to the GreA/GreB family.

Necessary for efficient RNA polymerase transcription elongation past template-encoded arresting sites. The arresting sites in DNA have the property of trapping a certain fraction of elongating RNA polymerases that pass through, resulting in locked ternary complexes. Cleavage of the nascent transcript by cleavage factors such as GreA or GreB allows the resumption of elongation from the new 3'terminus. GreA releases sequences of 2 to 3 nucleotides. This is Transcription elongation factor GreA from Yersinia pestis.